Reading from the N-terminus, the 158-residue chain is SsrA-binding protein (158 aa).

The protein belongs to the SmpB family.

It localises to the cytoplasm. Required for rescue of stalled ribosomes mediated by trans-translation. Binds to transfer-messenger RNA (tmRNA), required for stable association of tmRNA with ribosomes. tmRNA and SmpB together mimic tRNA shape, replacing the anticodon stem-loop with SmpB. tmRNA is encoded by the ssrA gene; the 2 termini fold to resemble tRNA(Ala) and it encodes a 'tag peptide', a short internal open reading frame. During trans-translation Ala-aminoacylated tmRNA acts like a tRNA, entering the A-site of stalled ribosomes, displacing the stalled mRNA. The ribosome then switches to translate the ORF on the tmRNA; the nascent peptide is terminated with the 'tag peptide' encoded by the tmRNA and targeted for degradation. The ribosome is freed to recommence translation, which seems to be the essential function of trans-translation. The chain is SsrA-binding protein from Bartonella quintana (strain Toulouse) (Rochalimaea quintana).